A 409-amino-acid chain; its full sequence is Beta-arrestin-2 (409 aa).

A Phosphotyrosine modification is found at Tyr-48. A hydroxyproline; by PHD2 mark is found at Pro-176 and Pro-181. The segment at 240–409 is interaction with TRAF6; it reads ADICLFSTAQ…KDDDYDDQLC (170 aa). At Ser-360 the chain carries Phosphoserine. Positions 363-409 are interaction with AP2B1; that stretch reads PETDVPVDTNLIEFDTNYATDDDIVFEDFARLRLKGMKDDDYDDQLC. Phosphothreonine is present on Thr-382. The short motif at 385 to 395 is the [DE]-X(1,2)-F-X-X-[FL]-X-X-X-R motif element; it reads DIVFEDFARLR.

It belongs to the arrestin family. As to quaternary structure, homooligomer; the self-association is mediated by InsP6-binding. Heterooligomer with ARRB1; the association is mediated by InsP6-binding. Interacts with ADRB2 and CHRM2. Interacts with PDE4A. Interacts with PDE4D. Interacts with MAPK10, MAPK1 and MAPK3. Interacts with DRD2. Interacts with FSHR. Interacts with CLTC. Interacts with HTR2C. Interacts with CCR5. Interacts with CXCR4. Interacts with SRC. Interacts with DUSP16; the interaction is interrupted by stimulation of AGTR1 and activation of MAPK10. Interacts with CHUK; the interaction is enhanced stimulation of ADRB2. Interacts with RELA. Interacts with MDM2; the interaction is enhanced by activation of GPCRs. Interacts with SLC9A5. Interacts with TRAF6. Interacts with IGF1R. Interacts with ENG. Interacts with KIR2DL1, KIR2DL3 and KIR2DL4. Interacts with LDLR. Interacts with AP2B1. Interacts with C5AR1. Interacts with RAF1. Interacts with MAP2K1. Interacts with MAPK1. Interacts with MAPK10; the interaction enhances MAPK10 activation by MAP3K5. Interacts with MAP2K4; the interaction is enhanced by presence of MAP3K5 and MAPK10. Interacts with MAP3K5. Interacts with AKT1. Interacts with IKBKB and MAP3K14. Interacts with SMO (activated). Interacts with GSK3A and GSK3B. Associates with protein phosphatase 2A (PP2A). Interacts with DHX8; the interaction is detected in the nucleus upon OR1D2 stimulation. Interacts with GAPDHS; the interaction is detected in the nucleus upon OR1D2 stimulation. Interacts with H2AFX; the interaction is detected in the nucleus upon OR1D2 stimulation. Interacts with KIF14; the interaction is detected in the nucleus upon OR1D2 stimulation. Interacts with RCC1; the interaction is detected in the nucleus upon OR1D2 stimulation. Interacts with CXCR4; the interaction is dependent on C-terminal phosphorylation of CXCR4 and allows activation of MAPK1 and MAPK3. Interacts with GPR143. Interacts with HCK and CXCR1 (phosphorylated). Interacts with ACKR3 and ACKR4. Interacts with ARRDC1; the interaction is direct. Interacts with GPR61, GPR62 and GPR135. Interacts (via NACHT and LRR domains) with NLRP3; this interaction is direct and inducible by omega-3 polyunsaturated fatty acids (PUFAs). Interacts with FFAR4 (via C-terminus); this interaction is stimulated by long-chain fatty acids (LCFAs). Interacts with GPR35. Interacts with GPR84. Interacts with TIGIT; this interaction inhibits the NF-kappa-B pathway. Interacts with TGFBR3. Post-translationally, phosphorylated at Thr-382 in the cytoplasm; probably dephosphorylated at the plasma membrane. The phosphorylation does not regulate internalization and recycling of ADRB2, interaction with clathrin or AP2B1. In terms of processing, the ubiquitination status appears to regulate the formation and trafficking of beta-arrestin-GPCR complexes and signaling. Ubiquitination appears to occur GPCR-specific. Ubiquitinated by MDM2; the ubiquitination is required for rapid internalization of ADRB2. Deubiquitinated by USP33; the deubiquitination leads to a dissociation of the beta-arrestin-GPCR complex. Stimulation of a class A GPCR, such as ADRB2, induces transient ubiquitination and subsequently promotes association with USP33. Stimulation of a class B GPCR promotes a sustained ubiquitination. Deubiquitinated by USP20; allowing USP20 to deubiquitinate TRAF6 leading to inhibition of NF-kappa-B signaling. Hydroxylation by PHD2 modulates the rate of internalization by slowing down recruitment to the plasma membrane and inhibiting subsequent co-internalization with class A receptors.

It localises to the cytoplasm. The protein localises to the nucleus. The protein resides in the cell membrane. It is found in the membrane. Its subcellular location is the clathrin-coated pit. It localises to the cytoplasmic vesicle. In terms of biological role, functions in regulating agonist-mediated G-protein coupled receptor (GPCR) signaling by mediating both receptor desensitization and resensitization processes. During homologous desensitization, beta-arrestins bind to the GPRK-phosphorylated receptor and sterically preclude its coupling to the cognate G-protein; the binding appears to require additional receptor determinants exposed only in the active receptor conformation. The beta-arrestins target many receptors for internalization by acting as endocytic adapters (CLASPs, clathrin-associated sorting proteins) and recruiting the GPRCs to the adapter protein 2 complex 2 (AP-2) in clathrin-coated pits (CCPs). However, the extent of beta-arrestin involvement appears to vary significantly depending on the receptor, agonist and cell type. Internalized arrestin-receptor complexes traffic to intracellular endosomes, where they remain uncoupled from G-proteins. Two different modes of arrestin-mediated internalization occur. Class A receptors, like ADRB2, OPRM1, ENDRA, D1AR and ADRA1B dissociate from beta-arrestin at or near the plasma membrane and undergo rapid recycling. Class B receptors, like AVPR2, AGTR1, NTSR1, TRHR and TACR1 internalize as a complex with arrestin and traffic with it to endosomal vesicles, presumably as desensitized receptors, for extended periods of time. Receptor resensitization then requires that receptor-bound arrestin is removed so that the receptor can be dephosphorylated and returned to the plasma membrane. Mediates endocytosis of CCR7 following ligation of CCL19 but not CCL21. Involved in internalization of P2RY1, P2RY4, P2RY6 and P2RY11 and ATP-stimulated internalization of P2RY2. Involved in phosphorylation-dependent internalization of OPRD1 and subsequent recycling or degradation. Involved in ubiquitination of IGF1R. Beta-arrestins function as multivalent adapter proteins that can switch the GPCR from a G-protein signaling mode that transmits short-lived signals from the plasma membrane via small molecule second messengers and ion channels to a beta-arrestin signaling mode that transmits a distinct set of signals that are initiated as the receptor internalizes and transits the intracellular compartment. Acts as a signaling scaffold for MAPK pathways such as MAPK1/3 (ERK1/2) and MAPK10 (JNK3). ERK1/2 and JNK3 activated by the beta-arrestin scaffold are largely excluded from the nucleus and confined to cytoplasmic locations such as endocytic vesicles, also called beta-arrestin signalosomes. Acts as a signaling scaffold for the AKT1 pathway. GPCRs for which the beta-arrestin-mediated signaling relies on both ARRB1 and ARRB2 (codependent regulation) include ADRB2, F2RL1 and PTH1R. For some GPCRs the beta-arrestin-mediated signaling relies on either ARRB1 or ARRB2 and is inhibited by the other respective beta-arrestin form (reciprocal regulation). Increases ERK1/2 signaling in AGTR1- and AVPR2-mediated activation (reciprocal regulation). Involved in CCR7-mediated ERK1/2 signaling involving ligand CCL19. Is involved in type-1A angiotensin II receptor/AGTR1-mediated ERK activity. Is involved in type-1A angiotensin II receptor/AGTR1-mediated MAPK10 activity. Is involved in dopamine-stimulated AKT1 activity in the striatum by disrupting the association of AKT1 with its negative regulator PP2A. Involved in AGTR1-mediated chemotaxis. Appears to function as signaling scaffold involved in regulation of MIP-1-beta-stimulated CCR5-dependent chemotaxis. Involved in attenuation of NF-kappa-B-dependent transcription in response to GPCR or cytokine stimulation by interacting with and stabilizing CHUK. Suppresses UV-induced NF-kappa-B-dependent activation by interacting with CHUK. The function is promoted by stimulation of ADRB2 and dephosphorylation of ARRB2. Involved in p53/TP53-mediated apoptosis by regulating MDM2 and reducing the MDM2-mediated degradation of p53/TP53. May serve as nuclear messenger for GPCRs. Upon stimulation of OR1D2, may be involved in regulation of gene expression during the early processes of fertilization. Also involved in regulation of receptors other than GPCRs. Involved in endocytosis of TGFBR2 and TGFBR3 and down-regulates TGF-beta signaling such as NF-kappa-B activation. Involved in endocytosis of low-density lipoprotein receptor/LDLR. Involved in endocytosis of smoothened homolog/Smo, which also requires GRK2. Involved in endocytosis of SLC9A5. Involved in endocytosis of ENG and subsequent TGF-beta-mediated ERK activation and migration of epithelial cells. Involved in Toll-like receptor and IL-1 receptor signaling through the interaction with TRAF6 which prevents TRAF6 autoubiquitination and oligomerization required for activation of NF-kappa-B and JUN. Involved in insulin resistance by acting as insulin-induced signaling scaffold for SRC, AKT1 and INSR. Involved in regulation of inhibitory signaling of natural killer cells by recruiting PTPN6 and PTPN11 to KIR2DL1. Involved in IL8-mediated granule release in neutrophils. Involved in the internalization of the atypical chemokine receptor ACKR3. Acts as an adapter protein coupling FFAR4 receptor to specific downstream signaling pathways, as well as mediating receptor endocytosis. During the activation step of NLRP3 inflammasome, directly associates with NLRP3 leading to inhibition of pro-inflammatory cytokine release and inhibition of inflammation. The sequence is that of Beta-arrestin-2 (ARRB2) from Homo sapiens (Human).